Reading from the N-terminus, the 313-residue chain is Homoserine kinase (313 aa).

An ATP-binding site is contributed by 92–102 (PPGRGLGSSGA).

Belongs to the GHMP kinase family. Homoserine kinase subfamily.

It is found in the cytoplasm. The catalysed reaction is L-homoserine + ATP = O-phospho-L-homoserine + ADP + H(+). It functions in the pathway amino-acid biosynthesis; L-threonine biosynthesis; L-threonine from L-aspartate: step 4/5. Catalyzes the ATP-dependent phosphorylation of L-homoserine to L-homoserine phosphate. This Aeropyrum pernix (strain ATCC 700893 / DSM 11879 / JCM 9820 / NBRC 100138 / K1) protein is Homoserine kinase.